The chain runs to 45 residues: Photosystem II reaction center protein K (45 aa).

Positions 1–8 (MNSALFLA) are excised as a propeptide. A helical transmembrane segment spans residues 23–43 (ILPVIPVFFLLLAFVWQAAIG).

The protein belongs to the PsbK family. As to quaternary structure, PSII is composed of 1 copy each of membrane proteins PsbA, PsbB, PsbC, PsbD, PsbE, PsbF, PsbH, PsbI, PsbJ, PsbK, PsbL, PsbM, PsbT, PsbX, PsbY, PsbZ, Psb30/Ycf12, at least 3 peripheral proteins of the oxygen-evolving complex and a large number of cofactors. It forms dimeric complexes.

It is found in the plastid. Its subcellular location is the chloroplast thylakoid membrane. In terms of biological role, one of the components of the core complex of photosystem II (PSII). PSII is a light-driven water:plastoquinone oxidoreductase that uses light energy to abstract electrons from H(2)O, generating O(2) and a proton gradient subsequently used for ATP formation. It consists of a core antenna complex that captures photons, and an electron transfer chain that converts photonic excitation into a charge separation. The protein is Photosystem II reaction center protein K of Pyropia yezoensis (Susabi-nori).